A 461-amino-acid polypeptide reads, in one-letter code: Ornithine decarboxylase (461 aa).

N6-(pyridoxal phosphate)lysine is present on K69. Pyridoxal 5'-phosphate contacts are provided by residues S200, G237, and 274 to 277; that span reads EPGR. A Phosphoserine; by CK2 modification is found at S303. 331–332 contacts substrate; that stretch reads YD. C360 acts as the Proton donor; shared with dimeric partner in catalysis. An S-nitrosocysteine modification is found at C360. Substrate is bound at residue D361. Y389 contacts pyridoxal 5'-phosphate.

Belongs to the Orn/Lys/Arg decarboxylase class-II family. In terms of assembly, homodimer. Only the dimer is catalytically active, as the active sites are constructed of residues from both monomers. Pyridoxal 5'-phosphate serves as cofactor.

It carries out the reaction L-ornithine + H(+) = putrescine + CO2. It participates in amine and polyamine biosynthesis; putrescine biosynthesis via L-ornithine pathway; putrescine from L-ornithine: step 1/1. Inhibited by antizymes (AZs) OAZ1, OAZ2 and OAZ3 in response to polyamine levels. AZs inhibit the assembly of the functional homodimer by binding to ODC monomers. Additionally, OAZ1 targets ODC monomers for ubiquitin-independent proteolytic destruction by the 26S proteasome. Catalyzes the first and rate-limiting step of polyamine biosynthesis that converts ornithine into putrescine, which is the precursor for the polyamines, spermidine and spermine. Polyamines are essential for cell proliferation and are implicated in cellular processes, ranging from DNA replication to apoptosis. This Bos taurus (Bovine) protein is Ornithine decarboxylase (ODC1).